Reading from the N-terminus, the 330-residue chain is Ig gamma-2A chain C region, A allele (330 aa).

Ig-like domains are found at residues 6-98, 121-220, and 229-325; these read PSVY…KKIE, PSVF…RTIS, and PQVY…KSFS. 3 disulfides stabilise this stretch: Cys27–Cys82, Cys144–Cys204, and Cys250–Cys308. Asn180 is a glycosylation site (N-linked (GlcNAc...) asparagine).

The protein is Ig gamma-2A chain C region, A allele (Ighg) of Mus musculus (Mouse).